The sequence spans 425 residues: Kynurenine/alpha-aminoadipate aminotransferase, mitochondrial (425 aa).

Residues 1 to 29 (MNYARFITAASAARNPSPIRTMTDILSRG) constitute a mitochondrion transit peptide. Position 20 (Arg20) interacts with substrate. Lys69 bears the N6-acetyllysine mark. Tyr74 and Tyr142 together coordinate substrate. Residue Lys179 is modified to N6-acetyllysine. The interval 181 to 208 (EDAKNPQKNTPKFLYTVPNGNNPTGNSL) is disordered. Residues 198 to 208 (PNGNNPTGNSL) are compositionally biased toward polar residues. Asn202 is a binding site for substrate. N6-(pyridoxal phosphate)lysine; alternate is present on Lys263. An N6-acetyllysine; alternate mark is found at Lys263, Lys339, and Lys367. 3 positions are modified to N6-succinyllysine; alternate: Lys263, Lys339, and Lys367. Arg399 serves as a coordination point for substrate. Lys422 is subject to N6-acetyllysine.

This sequence belongs to the class-I pyridoxal-phosphate-dependent aminotransferase family. Homodimer. The cofactor is pyridoxal 5'-phosphate. Higher expression in the liver. Also found in heart, brain, kidney, pancreas, prostate, testis and ovary.

The protein resides in the mitochondrion. The enzyme catalyses glycine + 2-oxoglutarate = glyoxylate + L-glutamate. The catalysed reaction is L-kynurenine + 2-oxoglutarate = kynurenate + L-glutamate + H2O. It carries out the reaction L-kynurenine + glyoxylate = kynurenate + glycine + H2O. It catalyses the reaction 3-hydroxy-L-kynurenine + glyoxylate = xanthurenate + glycine + H2O. The enzyme catalyses 2-oxohexanoate + L-kynurenine = L-2-aminohexanoate + kynurenate + H2O. The catalysed reaction is 3-phenylpyruvate + L-kynurenine = kynurenate + L-phenylalanine + H2O. It carries out the reaction 4-methylsulfanyl-2-oxobutanoate + L-kynurenine = kynurenate + L-methionine + H2O. It catalyses the reaction 2-oxo-3-sulfanylpropanoate + L-kynurenine = kynurenate + L-cysteine + H2O. The enzyme catalyses indole-3-pyruvate + L-kynurenine = kynurenate + L-tryptophan + H2O. The catalysed reaction is 2-oxopentanoate + L-kynurenine = L-2-aminopentanoate + kynurenate + H2O. It carries out the reaction 4-methyl-2-oxopentanoate + L-kynurenine = kynurenate + L-leucine + H2O. It catalyses the reaction L-2-aminoadipate + 2-oxoglutarate = 2-oxoadipate + L-glutamate. The enzyme catalyses glyoxylate + L-methionine = 4-methylsulfanyl-2-oxobutanoate + glycine. The catalysed reaction is L-2-aminoadipate + glyoxylate = 2-oxoadipate + glycine. It carries out the reaction L-tyrosine + glyoxylate = 3-(4-hydroxyphenyl)pyruvate + glycine. It catalyses the reaction glyoxylate + L-phenylalanine = 3-phenylpyruvate + glycine. The enzyme catalyses L-tryptophan + glyoxylate = indole-3-pyruvate + glycine. The catalysed reaction is L-leucine + glyoxylate = 4-methyl-2-oxopentanoate + glycine. It carries out the reaction 2-oxobutanoate + L-kynurenine = (2S)-2-aminobutanoate + kynurenate + H2O. It catalyses the reaction 2-oxoadipate + L-kynurenine = L-2-aminoadipate + kynurenate + H2O. Its pathway is amino-acid degradation; L-lysine degradation via saccharopine pathway; glutaryl-CoA from L-lysine: step 4/6. Kynurenine transaminase activity is competitively inhibited by aminoadipate, asparagine, glutamate, histidine, cysteine, lysine, 3-hydroxy-kynurenine and phenylalanine. Its function is as follows. Transaminase with broad substrate specificity. Has transaminase activity towards aminoadipate, kynurenine, methionine and glutamate. Shows activity also towards tryptophan, aspartate and hydroxykynurenine. Accepts a variety of oxo-acids as amino-group acceptors, with a preference for 2-oxoglutarate, 2-oxocaproic acid, phenylpyruvate and alpha-oxo-gamma-methiol butyric acid. Can also use glyoxylate as amino-group acceptor (in vitro). This chain is Kynurenine/alpha-aminoadipate aminotransferase, mitochondrial, found in Homo sapiens (Human).